The chain runs to 287 residues: ATP phosphoribosyltransferase (287 aa).

Belongs to the ATP phosphoribosyltransferase family. Long subfamily. Equilibrium between an active dimeric form, an inactive hexameric form and higher aggregates. Interconversion between the various forms is largely reversible and is influenced by the natural substrates and inhibitors of the enzyme. Mg(2+) serves as cofactor.

The protein localises to the cytoplasm. It carries out the reaction 1-(5-phospho-beta-D-ribosyl)-ATP + diphosphate = 5-phospho-alpha-D-ribose 1-diphosphate + ATP. Its pathway is amino-acid biosynthesis; L-histidine biosynthesis; L-histidine from 5-phospho-alpha-D-ribose 1-diphosphate: step 1/9. Its activity is regulated as follows. Feedback inhibited by histidine. Catalyzes the condensation of ATP and 5-phosphoribose 1-diphosphate to form N'-(5'-phosphoribosyl)-ATP (PR-ATP). Has a crucial role in the pathway because the rate of histidine biosynthesis seems to be controlled primarily by regulation of HisG enzymatic activity. The sequence is that of ATP phosphoribosyltransferase (hisG) from Mycobacterium leprae (strain TN).